Consider the following 232-residue polypeptide: RNA chaperone ProQ (232 aa).

Residues 105–182 (EAKARVQAQR…REEQHTPVSD (78 aa)) form a disordered region. Basic and acidic residues-rich tracts occupy residues 117-138 (QQAK…PPRE) and 147-177 (RRKE…EEQH).

Belongs to the ProQ family.

The protein localises to the cytoplasm. RNA chaperone with significant RNA binding, RNA strand exchange and RNA duplexing activities. May regulate ProP activity through an RNA-based, post-transcriptional mechanism. The protein is RNA chaperone ProQ of Escherichia coli O139:H28 (strain E24377A / ETEC).